Here is a 528-residue protein sequence, read N- to C-terminus: Na(+)/H(+) antiporter NhaB (528 aa).

10 helical membrane-spanning segments follow: residues 25–47 (IISFLVINPIVFYFNPFIAGWLL), 66–86 (PGGLLAIEAVAIGMTSPSQVL), 97–117 (LLLVFMVAGIYFMKQLLLFVF), 130–164 (VSLLFCVSSAFLSAFLDALTVIAVIITVAVGFYSI), 241–261 (IRMSPVTVPVFFAGVTTCFLV), 304–324 (AFIGVWLIAGLALHLASVGLI), 351–371 (ALPFTALLAVFFAIVAVIIDL), 390–410 (LVVFYIANGLLSMVSDNVFVG), 448–468 (ATPNGQAAFLFLLTSAIAPLI), and 476–496 (VWMALPYTIVLSIVGVLAIQL).

This sequence belongs to the NhaB Na(+)/H(+) (TC 2.A.34) antiporter family.

The protein resides in the cell inner membrane. It carries out the reaction 2 Na(+)(in) + 3 H(+)(out) = 2 Na(+)(out) + 3 H(+)(in). In terms of biological role, na(+)/H(+) antiporter that extrudes sodium in exchange for external protons. This chain is Na(+)/H(+) antiporter NhaB, found in Shewanella halifaxensis (strain HAW-EB4).